Here is a 392-residue protein sequence, read N- to C-terminus: Chorismate synthase (392 aa).

The NADP(+) site is built by R39 and R45. Residues 128-130, 248-249, G300, 315-319, and R341 each bind FMN; these read RSS, QA, and KPIPT.

It belongs to the chorismate synthase family. As to quaternary structure, homotetramer. It depends on FMNH2 as a cofactor.

The catalysed reaction is 5-O-(1-carboxyvinyl)-3-phosphoshikimate = chorismate + phosphate. It functions in the pathway metabolic intermediate biosynthesis; chorismate biosynthesis; chorismate from D-erythrose 4-phosphate and phosphoenolpyruvate: step 7/7. In terms of biological role, catalyzes the anti-1,4-elimination of the C-3 phosphate and the C-6 proR hydrogen from 5-enolpyruvylshikimate-3-phosphate (EPSP) to yield chorismate, which is the branch point compound that serves as the starting substrate for the three terminal pathways of aromatic amino acid biosynthesis. This reaction introduces a second double bond into the aromatic ring system. The chain is Chorismate synthase from Trichlorobacter lovleyi (strain ATCC BAA-1151 / DSM 17278 / SZ) (Geobacter lovleyi).